The sequence spans 168 residues: Ribosome maturation factor RimP (168 aa).

Belongs to the RimP family.

It localises to the cytoplasm. Required for maturation of 30S ribosomal subunits. This Rickettsia bellii (strain OSU 85-389) protein is Ribosome maturation factor RimP.